We begin with the raw amino-acid sequence, 682 residues long: Glutamine--fructose-6-phosphate aminotransferase [isomerizing] 2 (682 aa).

Cys-2 (for GATase activity) is an active-site residue. One can recognise a Glutamine amidotransferase type-2 domain in the interval 2 to 288 (CGIFAYMNYR…DDDIAAVADG (287 aa)). Ser-244 is modified (phosphoserine). SIS domains lie at 360 to 499 (HLKE…DRIS) and 531 to 672 (LALE…VDFP). Residues 377-378 (TS), 422-424 (SQS), Thr-427, and His-578 contribute to the substrate site.

As to expression, highest levels of expression in heart, placenta, and spinal cord.

It carries out the reaction D-fructose 6-phosphate + L-glutamine = D-glucosamine 6-phosphate + L-glutamate. It participates in nucleotide-sugar biosynthesis; UDP-N-acetyl-alpha-D-glucosamine biosynthesis; alpha-D-glucosamine 6-phosphate from D-fructose 6-phosphate: step 1/1. Its function is as follows. Controls the flux of glucose into the hexosamine pathway. Most likely involved in regulating the availability of precursors for N- and O-linked glycosylation of proteins. This Homo sapiens (Human) protein is Glutamine--fructose-6-phosphate aminotransferase [isomerizing] 2 (GFPT2).